Here is a 433-residue protein sequence, read N- to C-terminus: Ribosome biogenesis protein WDR12 homolog (433 aa).

The residue at position 1 (Met1) is an N-acetylmethionine. The ubiquitin-like (UBL) domain stretch occupies residues 12-96 (LHVKFVTKLD…ERTLEIEYIR (85 aa)). WD repeat units lie at residues 108 to 146 (LHDDWVSAVNGSSPRFILTGCYDGLGRVWSSAGSCSHIL), 148 to 191 (GHSG…SVDS), 203 to 242 (GHKASVQSVSAQKSGNMVCSSSWDCTINLWNTNESTSEGE), 270 to 308 (GHTQCVSSVVWPEHDVIYSSSWDHSVRRWDVETGKDSLN), 310 to 350 (FCGK…TSAP), 356 to 396 (SHSS…PLSV), and 399 to 433 (THNDKVLSADWWKGESVVSGGADSNLRISSGIAIS). The interval 238-263 (TSEGESVSVKKRKGNNQAEESQSEGE) is disordered.

This sequence belongs to the WD repeat WDR12/YTM1 family. As to quaternary structure, interacts with PES. Interacts with BOP1.

Its subcellular location is the nucleus. It is found in the nucleolus. The protein localises to the nucleoplasm. In terms of biological role, required for maturation of ribosomal RNAs and formation of the large ribosomal subunit. The chain is Ribosome biogenesis protein WDR12 homolog from Arabidopsis thaliana (Mouse-ear cress).